The following is a 275-amino-acid chain: 3-methyl-2-oxobutanoate hydroxymethyltransferase (275 aa).

Positions 49 and 88 each coordinate Mg(2+). 3-methyl-2-oxobutanoate-binding positions include aspartate 49–serine 50, aspartate 88, and lysine 118. Glutamate 120 contributes to the Mg(2+) binding site. Residue glutamate 187 is the Proton acceptor of the active site.

The protein belongs to the PanB family. Homodecamer; pentamer of dimers. It depends on Mg(2+) as a cofactor.

The protein resides in the cytoplasm. It catalyses the reaction 3-methyl-2-oxobutanoate + (6R)-5,10-methylene-5,6,7,8-tetrahydrofolate + H2O = 2-dehydropantoate + (6S)-5,6,7,8-tetrahydrofolate. The protein operates within cofactor biosynthesis; (R)-pantothenate biosynthesis; (R)-pantoate from 3-methyl-2-oxobutanoate: step 1/2. Functionally, catalyzes the reversible reaction in which hydroxymethyl group from 5,10-methylenetetrahydrofolate is transferred onto alpha-ketoisovalerate to form ketopantoate. The protein is 3-methyl-2-oxobutanoate hydroxymethyltransferase of Bordetella petrii (strain ATCC BAA-461 / DSM 12804 / CCUG 43448).